The sequence spans 350 residues: Probable dTDP-glucose 4,6-dehydratase (350 aa).

Residue 7–13 (GGAGFIG) coordinates NAD(+). Substrate is bound at residue threonine 132. Catalysis depends on aspartate 133, which acts as the Proton donor. Catalysis depends on proton acceptor residues glutamate 134 and tyrosine 157.

It belongs to the NAD(P)-dependent epimerase/dehydratase family. dTDP-glucose dehydratase subfamily. Requires NAD(+) as cofactor.

The enzyme catalyses dTDP-alpha-D-glucose = dTDP-4-dehydro-6-deoxy-alpha-D-glucose + H2O. The protein operates within carbohydrate biosynthesis; dTDP-L-rhamnose biosynthesis. This is Probable dTDP-glucose 4,6-dehydratase from Sinorhizobium fredii (strain NBRC 101917 / NGR234).